Here is a 115-residue protein sequence, read N- to C-terminus: U3-lycotoxin-Ls1d (115 aa).

Residues M1–A20 form the signal peptide. Positions E21 to R44 are excised as a propeptide. Disulfide bonds link C48/C63, C55/C72, C62/C87, and C74/C85.

This sequence belongs to the neurotoxin 19 (CSTX) family. 01 subfamily. Expressed by the venom gland.

The protein localises to the secreted. This Lycosa singoriensis (Wolf spider) protein is U3-lycotoxin-Ls1d.